The following is a 58-amino-acid chain: Conotoxin Ar5.4 (58 aa).

The propeptide occupies arginine 1–lysine 20.

The protein belongs to the conotoxin T superfamily. Post-translationally, contains 2 disulfide bonds that can be either 'C1-C3, C2-C4' or 'C1-C4, C2-C3', since these disulfide connectivities have been observed for conotoxins with cysteine framework V (for examples, see AC P0DQQ7 and AC P81755). As to expression, expressed by the venom duct.

It localises to the secreted. In Conus arenatus (Sand-dusted cone), this protein is Conotoxin Ar5.4.